Here is a 1580-residue protein sequence, read N- to C-terminus: Collagen alpha-1(XVI) chain (1580 aa).

Positions 1-21 (MLTSWAPGLWVLGLWATFSHG) are cleaved as a signal peptide. N-linked (GlcNAc...) asparagine glycosylation occurs at Asn-47. In terms of domain architecture, Laminin G-like spans 50 to 231 (GFNLIRRLNL…LQQAHIYCDP (182 aa)). Positions 232–374 (ELVLEEGCCE…SPDAPLQCVE (143 aa)) are nonhelical region 10 (NC10). The tract at residues 324-547 (RESNVTLGPS…DPAPAWEGLG (224 aa)) is disordered. Asn-327 carries an N-linked (GlcNAc...) asparagine glycan. The Collagen-like 1 domain occupies 375–424 (GPKGEKGESGDLGPPGLPGPTGQKGQKGEKGDGGLKGLPGKPGRDGRPGE). The segment at 375–509 (GPKGEKGESG…PGTKGEKGDP (135 aa)) is triple-helical region 9 (COL9) with 3 imperfections. Pro residues predominate over residues 449-460 (PGPPGLPGPPGI). Residues 486 to 495 (GKEGPGGKPG) are compositionally biased toward gly residues. Residues 510 to 524 (CEVCPTLPEGSQNFV) form a nonhelical region 9 (NC9) region. A triple-helical region 8 (COL8) with 1 imperfection region spans residues 525-570 (GLPGKPGPKGEPGDPAPAWEGLGTVGLKGDRGDPGIQGMKGEKGEP). Residues 555–557 (RGD) carry the Cell attachment site motif. Residues 571–586 (CSSCSSGVGAQHLGPS) are nonhelical region 8 (NC8). The span at 585–598 (PSPGHGLPGLPGTS) shows a compositional bias: low complexity. The disordered stretch occupies residues 585-935 (PSPGHGLPGL…LPGQPGLTAE (351 aa)). A triple-helical region 7 (COL7) with 1 imperfection region spans residues 587–640 (PGHGLPGLPGTSGIPGPRGLKGEKGSFGDTGPAGVPGSPGPVGPAGIKGAKGEP). 2 Collagen-like domains span residues 590–643 (GLPG…PCEP) and 676–725 (GLPG…PAGP). The nonhelical region 7 (NC7) stretch occupies residues 641–661 (CEPCTALSELQDGDMRVVHLP). Positions 662-732 (GPAGEKGEPG…AGPKGEKGDG (71 aa)) are triple-helical region 6 (COL6) with 1 imperfection. The span at 683–693 (KAGERGLKGQK) shows a compositional bias: basic and acidic residues. A compositionally biased stretch (low complexity) spans 698 to 714 (NPGDPGTPGITGQPGIS). The segment at 733–747 (CTACPSLQGALTDVS) is nonhelical region 6 (NC6). The triple-helical region 5 (COL5) with 3 imperfections stretch occupies residues 748-870 (GLPGKPGPKG…RGEKGEPGEC (123 aa)). Residues 797–848 (GAEGPQGEPGTQGLPGTQGLPGPRGPPGSAGEKGAQGSPGPKGAIGPMGPPG) form the Collagen-like 4 domain. The span at 801 to 817 (PQGEPGTQGLPGTQGLP) shows a compositional bias: low complexity. The segment at 871 to 881 (SCPSRGEPIFS) is nonhelical region 5 (NC5). The triple-helical region 4 (COL4) with 2 imperfections stretch occupies residues 882–933 (GMPGAPGLWMGSSSQPGPQGPPGVPGPPGPPGMPGLQGVPGHNGLPGQPGLT). Over residues 899–914 (PQGPPGVPGPPGPPGM) the composition is skewed to pro residues. A nonhelical region 4 (NC4) region spans residues 934–967 (AELGSLPIEKHLLKSICGDCAQGQTAHPAFLLEK). A triple-helical region 3 (COL3) region spans residues 968-982 (GEKGDQGIPGVPGFD). Residues 983–1005 (NCARCFIERERPRAEEARGDNSE) are nonhelical region 3 (NC3). Disordered stretches follow at residues 995-1405 (RAEE…LPGS) and 1445-1523 (AAAP…GYGK). The Cell attachment site motif lies at 1000 to 1002 (RGD). Positions 1006–1063 (GEPGCSGSPGLPGPPGMPGQRGEEGPPGMRGSPGPPGPIGLQGERGLTGLTGDKGEPG) constitute a Collagen-like 5 domain. The triple-helical region 2 (COL2) with 2 imperfections stretch occupies residues 1006–1409 (GEPGCSGSPG…PGLPGSMGDM (404 aa)). The span at 1098–1107 (SGPPGSEGLP) shows a compositional bias: low complexity. Pro residues-rich tracts occupy residues 1139-1148 (FPGPPGPPGF) and 1178-1187 (SPGPPGPPGI). Over residues 1196-1205 (LDGKDGKPGL) the composition is skewed to basic and acidic residues. The Cell attachment site motif lies at 1206–1208 (RGD). The 54-residue stretch at 1210–1263 (GPAGPPGLMGPPGFKGKTGHPGLPGPKGDCGKPGPPGSSGRPGAEGEPGAMGPQ) folds into the Collagen-like 6 domain. Low complexity predominate over residues 1247–1263 (SSGRPGAEGEPGAMGPQ). Residues 1265-1281 (RPGPPGHLGPPGQPGPP) are compositionally biased toward pro residues. 3 Collagen-like domains span residues 1350–1407 (GQKG…GSMG), 1448–1500 (PGRP…GDIG), and 1504–1552 (AGEN…GKAG). Positions 1362–1371 (GMPGGPGKSG) are enriched in gly residues. The span at 1396-1405 (NPGLPGLPGS) shows a compositional bias: low complexity. The interval 1410-1448 (VNYDDIKRFIRQEIIKLFDERMAYYTSRMQFPMEVAAAP) is nonhelical region 2 (NC2). Residues 1449 to 1554 (GRPGPPGKDG…MGQPGKAGHC (106 aa)) form a triple-helical region 1 (COL1) with 2 imperfections region. Positions 1555-1580 (NPSDCFGAMPMEQQYPPMKSMKGPFG) are nonhelical region 1 (NC1).

The protein belongs to the fibril-associated collagens with interrupted helices (FACIT) family. As to quaternary structure, homotrimer. Interacts with FBN1, fibronectin and integrins ITGA1/ITGB1 and ITGA2/ITGB1. Integrin ITGA1/ITGB1 binds to a unique site within COL16A1 located close to its C-terminal end between collagenous domains COL1-COL3. In terms of processing, prolines at the third position of the tripeptide repeating unit (G-X-Y) are hydroxylated in some or all of the chains. Glycosylated. Expressed in most tissues examined with highest levels of expression observed in heart. Strongly expressed in cortical and medullar regions of kidney and more weakly expressed in lung. Also detected in the ciliary muscle of the eye, on the serosa layer lining the muscularis externa of intestinal tissue, and in the perimysium membrane lining both the cardiac muscle bundle and the smooth muscle tissue of the small intestine. Strongly stained in particulate or granular structures. Not detected in brain or skeletal muscle.

Its subcellular location is the secreted. It is found in the extracellular space. The protein localises to the extracellular matrix. Functionally, involved in mediating cell attachment and inducing integrin-mediated cellular reactions, such as cell spreading and alterations in cell morphology. This chain is Collagen alpha-1(XVI) chain, found in Mus musculus (Mouse).